We begin with the raw amino-acid sequence, 362 residues long: Heat-inducible transcription repressor HrcA (362 aa).

The protein belongs to the HrcA family.

Functionally, negative regulator of class I heat shock genes (grpE-dnaK-dnaJ and groELS operons). Prevents heat-shock induction of these operons. The chain is Heat-inducible transcription repressor HrcA from Rhodopseudomonas palustris (strain ATCC BAA-98 / CGA009).